Reading from the N-terminus, the 512-residue chain is Maturase K (512 aa).

This sequence belongs to the intron maturase 2 family. MatK subfamily.

Its subcellular location is the plastid. It is found in the chloroplast. Usually encoded in the trnK tRNA gene intron. Probably assists in splicing its own and other chloroplast group II introns. The chain is Maturase K from Acer platanoides (Norway maple).